The chain runs to 626 residues: Beta-galactosidase large subunit (626 aa).

Residue E466 is the Proton donor of the active site. E534 (nucleophile) is an active-site residue.

Belongs to the glycosyl hydrolase 2 family. In terms of assembly, heterodimer of a large (LacL) and a small subunit (LacM).

It carries out the reaction Hydrolysis of terminal non-reducing beta-D-galactose residues in beta-D-galactosides.. Component of a beta-galactosidase that displays activity with the artificial chromogenic substrate o-nitrophenyl-beta-D-galactopyranoside (ONPG). The chain is Beta-galactosidase large subunit from Leuconostoc lactis.